The following is a 318-amino-acid chain: Taste receptor type 2 member 60 (318 aa).

Over Met-1 to Val-7 the chain is Extracellular. Residues Leu-8–Arg-28 form a helical membrane-spanning segment. Residues Leu-29–Ala-40 are Cytoplasmic-facing. Residues Ala-41–Ser-61 traverse the membrane as a helical segment. Residues Leu-62–Pro-88 are Extracellular-facing. The helical transmembrane segment at Tyr-89–Trp-109 threads the bilayer. Topologically, residues Phe-110–Pro-128 are cytoplasmic. The helical transmembrane segment at Val-129–Val-149 threads the bilayer. Topologically, residues Gly-150–Asn-183 are extracellular. Asn-179 carries N-linked (GlcNAc...) asparagine glycosylation. A helical membrane pass occupies residues Ser-184–Met-204. The Cytoplasmic segment spans residues Pro-205–Phe-234. A helical membrane pass occupies residues Arg-235–Leu-255. Over Phe-256 to Val-264 the chain is Extracellular. The helical transmembrane segment at Phe-265–Ile-285 threads the bilayer. Residues Tyr-286–Pro-318 lie on the Cytoplasmic side of the membrane.

It belongs to the G-protein coupled receptor T2R family.

The protein resides in the membrane. Functionally, receptor that may play a role in the perception of bitterness and is gustducin-linked. May play a role in sensing the chemical composition of the gastrointestinal content. The activity of this receptor may stimulate alpha gustducin, mediate PLC-beta-2 activation and lead to the gating of TRPM5. The sequence is that of Taste receptor type 2 member 60 (TAS2R60) from Pan paniscus (Pygmy chimpanzee).